The primary structure comprises 360 residues: Peptide chain release factor 1 (360 aa).

N5-methylglutamine is present on Gln235. Positions 284–313 (AKRQQAEASTRRNLLGSGDRSDRNRTYNFP) are disordered.

Belongs to the prokaryotic/mitochondrial release factor family. Post-translationally, methylated by PrmC. Methylation increases the termination efficiency of RF1.

Its subcellular location is the cytoplasm. Peptide chain release factor 1 directs the termination of translation in response to the peptide chain termination codons UAG and UAA. This chain is Peptide chain release factor 1, found in Salmonella arizonae (strain ATCC BAA-731 / CDC346-86 / RSK2980).